A 150-amino-acid polypeptide reads, in one-letter code: Large ribosomal subunit protein bL9 (150 aa).

This sequence belongs to the bacterial ribosomal protein bL9 family.

Binds to the 23S rRNA. In Wolinella succinogenes (strain ATCC 29543 / DSM 1740 / CCUG 13145 / JCM 31913 / LMG 7466 / NCTC 11488 / FDC 602W) (Vibrio succinogenes), this protein is Large ribosomal subunit protein bL9.